The following is a 957-amino-acid chain: MTNPSEGTSSSAQSLAYRYTPELANAIEREWQNYWTDKGTFNAPNPVGDLAPEDGRELPGDKLFVQDMFPYPSGAGLHVGHPLGYIATDVFARYNRMLGKNVLHTLGYDAFGLPAEQYAIQTGTHPRTTTMANIENMKRQLGALGLGHDPRRAVASTDPEFYKWTQWIFLQIFNSWFDEEQQKARPISELIPLLESGEIPTRDGADYNGLDRVAKQKAIDEFRLVYRSNSTVNWCPGLGTVLANEEVTADGRSERGNFPVFRKNLSQWMMRITAYSDRLIDDLELLDWPEKVKSMQRNWIGRSRGAEVDFTAEGETITVFTTRPDTLFGATYMVLAPEHELVDVLVSRGTGSYDGVDPRWTNGQATPAEAVAAYRASIAAKSDLERQENKDKTGVFLGVHATNPVNGEQIPVFIADYVLTGYGTGAIMAVPAHDDRDYEFATVFGLPIVEVVAGGNIAEAAYTASGESINSANDQGLDINGLAMVDAVARTIEWLEEKQLGRGTIQYKLRDWLFARQRYWGEPFPVVYDEDGVAYALPESMLPVELPEVEDYKPVSFDPEDADSEPSPPLAKAREWVEVELDLGDGVKKYTRDTNVMPQWAGSSWYQLRYIDPTNDDQFCNLENEAYWTGPRPDVHGPNDPGGVDLYVGGVEHAVLHLLYSRFWHKVLYDLGYVTSKEPYRRLYNQGYIQAFAYTDSRGVYVPAEEVEEKDGKFFYQGEEVTQEYGKMGKSLKNAVAPDDICNNYGADTLRVYEMSMGPLDTSRPWATKDVVGAQRFLQRLWRLIVDENTGEVLTRDEALTDEDNKHLHRTIAGVRDDYANLRVNTVVAKLIEYVNYLTKTYPDTIPTGAVLPLVVMVSPVAPHIAEELWKKLGHTDTVTYEPFPTFEEKWLTDDEVELPVQINGKVRSRITVAADASQEQIIEVALADEKIALQIEGKNLIKQIVIPGRMVNLVVK.

Positions 70–81 (PYPSGAGLHVGH) match the 'HIGH' region motif. A 'KMSKS' region motif is present at residues 727–731 (KMGKS). ATP is bound at residue Lys730.

The protein belongs to the class-I aminoacyl-tRNA synthetase family.

It is found in the cytoplasm. It carries out the reaction tRNA(Leu) + L-leucine + ATP = L-leucyl-tRNA(Leu) + AMP + diphosphate. This chain is Leucine--tRNA ligase, found in Corynebacterium efficiens (strain DSM 44549 / YS-314 / AJ 12310 / JCM 11189 / NBRC 100395).